The following is an 81-amino-acid chain: Antitoxin MT2731 (81 aa).

In terms of biological role, antitoxin component of a type II toxin-antitoxin (TA) system. Neutralizes the effect of cognate toxin MT2730. The chain is Antitoxin MT2731 from Mycobacterium tuberculosis (strain CDC 1551 / Oshkosh).